A 314-amino-acid polypeptide reads, in one-letter code: tRNA dimethylallyltransferase (314 aa).

10-17 (GPTGVGKT) contributes to the ATP binding site. 12–17 (TGVGKT) contacts substrate. Residues 35-38 (DSMQ) form an interaction with substrate tRNA region.

It belongs to the IPP transferase family. In terms of assembly, monomer. It depends on Mg(2+) as a cofactor.

The catalysed reaction is adenosine(37) in tRNA + dimethylallyl diphosphate = N(6)-dimethylallyladenosine(37) in tRNA + diphosphate. Catalyzes the transfer of a dimethylallyl group onto the adenine at position 37 in tRNAs that read codons beginning with uridine, leading to the formation of N6-(dimethylallyl)adenosine (i(6)A). This is tRNA dimethylallyltransferase from Finegoldia magna (strain ATCC 29328 / DSM 20472 / WAL 2508) (Peptostreptococcus magnus).